Reading from the N-terminus, the 283-residue chain is Isochorismatase domain-containing protein 1 (283 aa).

Belongs to the isochorismatase family.

In Salmo salar (Atlantic salmon), this protein is Isochorismatase domain-containing protein 1 (isoc1).